A 170-amino-acid chain; its full sequence is Head completion protein (170 aa).

The protein localises to the virion. In terms of biological role, head completion protein that closes the capsid once the viral DNA has been packaged. Probably part of the head-tail connector by binding to the portal protein and to the tail completion protein. The chain is Head completion protein from Escherichia coli (Enterobacteria phage T5).